Reading from the N-terminus, the 462-residue chain is tRNA modification GTPase MnmE (462 aa).

Residues arginine 23, glutamate 86, and lysine 125 each coordinate (6S)-5-formyl-5,6,7,8-tetrahydrofolate. The region spanning 221–384 is the TrmE-type G domain; sequence GIPVAIVGEP…LKNQLLSFVN (164 aa). K(+) is bound at residue asparagine 231. GTP contacts are provided by residues 231–236, 250–256, and 275–278; these read NVGKST, SEIAGTT, and DTAG. Serine 235 serves as a coordination point for Mg(2+). 3 residues coordinate K(+): serine 250, isoleucine 252, and threonine 255. Threonine 256 is a Mg(2+) binding site. Lysine 462 contacts (6S)-5-formyl-5,6,7,8-tetrahydrofolate.

Belongs to the TRAFAC class TrmE-Era-EngA-EngB-Septin-like GTPase superfamily. TrmE GTPase family. As to quaternary structure, homodimer. Heterotetramer of two MnmE and two MnmG subunits. K(+) is required as a cofactor.

The protein localises to the cytoplasm. In terms of biological role, exhibits a very high intrinsic GTPase hydrolysis rate. Involved in the addition of a carboxymethylaminomethyl (cmnm) group at the wobble position (U34) of certain tRNAs, forming tRNA-cmnm(5)s(2)U34. In Flavobacterium psychrophilum (strain ATCC 49511 / DSM 21280 / CIP 103535 / JIP02/86), this protein is tRNA modification GTPase MnmE.